A 410-amino-acid polypeptide reads, in one-letter code: Dipeptidase 1 (410 aa).

An N-terminal signal peptide occupies residues 1-16 (MWTGWWLWPLVAVCTA). His-36 and Asp-38 together coordinate Zn(2+). N-linked (GlcNAc...) asparagine glycans are attached at residues Asn-57 and Asn-62. Cysteines 87 and 170 form a disulfide. Residue Glu-141 participates in Zn(2+) binding. Position 168 (His-168) interacts with substrate. Zn(2+)-binding residues include His-214 and His-235. Residues Cys-242 and Cys-274 are joined by a disulfide bond. Position 246 (Arg-246) interacts with substrate. Asn-279 carries N-linked (GlcNAc...) asparagine glycosylation. Asp-304 provides a ligand contact to substrate. Ser-384 is lipidated: GPI-anchor amidated serine. A propeptide spans 385–410 (GAPSLHLQPGTLLASLVTLLLSLCLL) (removed in mature form).

Belongs to the metallo-dependent hydrolases superfamily. Peptidase M19 family. In terms of assembly, homodimer; disulfide-linked. It depends on Zn(2+) as a cofactor.

It localises to the apical cell membrane. The enzyme catalyses an L-aminoacyl-L-amino acid + H2O = 2 an L-alpha-amino acid. It carries out the reaction leukotriene D4 + H2O = leukotriene E4 + glycine. It catalyses the reaction L-cystine-bis-glycine + 2 H2O = L-cystine + 2 glycine. The catalysed reaction is a beta-lactam + H2O = a substituted beta-amino acid. The enzyme catalyses glycyldehydrophenylalanine + H2O = 2,3-didehydrophenylalanine + glycine. Its activity is regulated as follows. Inhibited by L-penicillamine. Inhibited by cilastatin. Functionally, hydrolyzes a wide range of dipeptides including the conversion of leukotriene D4 to leukotriene E4. Hydrolyzes cystinyl-bis-glycine (cys-bis-gly) formed during glutathione degradation. Also possesses beta lactamase activity and hydrolytically inactivates beta-lactam antibiotics. Independently of its dipeptidase activity, acts as an adhesion receptor for neutrophil recruitment from bloodstream into inflamed lungs and liver. This is Dipeptidase 1 (DPEP1) from Bos taurus (Bovine).